A 500-amino-acid polypeptide reads, in one-letter code: Zinc finger protein 689 (500 aa).

Residues 1 to 24 are disordered; sequence MAPPSAPLLEQAPGEVGPTRRRGR. The region spanning 29-100 is the KRAB domain; the sequence is LKFADVAVYF…AALDPQEYRR (72 aa). Residues 110 to 144 form a disordered region; it reads TRQKNEEKEVFPPKDVPRKGKRGRKPSKPRLIARQ. The segment covering 112-127 has biased composition (basic and acidic residues); the sequence is QKNEEKEVFPPKDVPR. Residues 128-137 show a composition bias toward basic residues; that stretch reads KGKRGRKPSK. The C2H2-type 1; degenerate zinc finger occupies 149 to 171; that stretch reads PICPDCGCTFPDLPALESHKCAQ. C2H2-type zinc fingers lie at residues 177 to 199, 205 to 227, 233 to 255, 261 to 283, 289 to 311, 317 to 339, 345 to 367, 373 to 395, 401 to 423, and 429 to 451; these read YPCP…RRAH, YVCD…QVIH, YHCP…RTTH, HQCP…QRTH, YTCL…QRIH, YPCP…RRVH, YACE…QLLH, YPCP…RSTH, HACD…RRVH, and YACD…QLLH. Residue lysine 455 forms a Glycyl lysine isopeptide (Lys-Gly) (interchain with G-Cter in SUMO2) linkage. Residues 457–482 form a C2H2-type 12 zinc finger; it reads FPCLECGRCFRQRWSLAVHKCCPNTH.

Belongs to the krueppel C2H2-type zinc-finger protein family.

The protein localises to the nucleus. May be involved in transcriptional regulation. In Rattus norvegicus (Rat), this protein is Zinc finger protein 689 (Znf689).